A 442-amino-acid polypeptide reads, in one-letter code: GTPase Der (442 aa).

2 EngA-type G domains span residues 2–168 (ATVL…EEAG) and 182–356 (LKVA…EKID). Residues 8 to 15 (GRPNVGKS), 55 to 59 (DTCGL), 118 to 121 (NKVE), 188 to 195 (GKPNAGKS), 235 to 239 (DTAGM), and 301 to 304 (NKSD) each bind GTP. In terms of domain architecture, KH-like spans 357–442 (LRIPTGLLNN…PIFIKLRRKK (86 aa)).

Belongs to the TRAFAC class TrmE-Era-EngA-EngB-Septin-like GTPase superfamily. EngA (Der) GTPase family. Associates with the 50S ribosomal subunit.

GTPase that plays an essential role in the late steps of ribosome biogenesis. This chain is GTPase Der, found in Kosmotoga olearia (strain ATCC BAA-1733 / DSM 21960 / TBF 19.5.1).